The chain runs to 426 residues: Putative zinc protease AlbF (426 aa).

His66 contributes to the Zn(2+) binding site. The Proton acceptor role is filled by Glu69. Zn(2+) contacts are provided by His70 and Glu142.

Belongs to the peptidase M16 family. Zn(2+) is required as a cofactor.

Required for production of the bacteriocin subtilosin. Could catalyze some step in the processing of presubtilosin. The sequence is that of Putative zinc protease AlbF (albF) from Bacillus subtilis (strain 168).